The chain runs to 96 residues: Neurotoxin 23 (96 aa).

The signal sequence occupies residues 1–22 (MKNIVIIITVAVLFNLFGESLQ). The LCN-type CS-alpha/beta domain occupies 26 to 89 (FETYPLNQDD…FLAEIIDTCN (64 aa)). 3 disulfide bridges follow: cysteine 40-cysteine 63, cysteine 49-cysteine 68, and cysteine 53-cysteine 70.

The protein belongs to the long (3 C-C) scorpion toxin superfamily. As to expression, expressed by the venom gland.

It localises to the secreted. This is Neurotoxin 23 from Lychas mucronatus (Chinese swimming scorpion).